The primary structure comprises 375 residues: Trans-enoyl reductase iccB (375 aa).

48–51 (VDAK) serves as a coordination point for NADP(+). Residue 143–150 (AAVATVGL) coordinates substrate. NADP(+) contacts are provided by residues 204–207 (SSAS), Tyr-222, and 269–270 (LD). A substrate-binding site is contributed by 289 to 293 (TYSQF). 358 to 359 (IK) contributes to the NADP(+) binding site.

The protein belongs to the zinc-containing alcohol dehydrogenase family. As to quaternary structure, monomer.

The enzyme catalyses N-[(4E,6E,10S,12Z,14E)-6,10-dimethyl-3-oxohexadeca-4,6,12,14-tetraenoyl]-L-tyrosyl-[ACP] = (3E,5S)-3-[(2E,4E,8S,10E,12Z)-1-hydroxy-4,8-dimethyltetradeca-2,4,10,12-tetraen-1-ylidene]-5-[(4-hydroxyphenyl)methyl]pyrrolidine-2,4-dione + holo-[ACP] + H(+). The protein operates within mycotoxin biosynthesis. Trans-enoyl reductase; part of the gene cluster that mediates the biosynthesis of ilicicolin H, a 4-hydroxy-2-pyridonealkaloid that has potent and broad antifungal activities by inhibiting the mitochondrial respiration chain. IccB collaborates with the hybrid PKS-NRPS synthetase iccA to assemble the backbone of ilicicolin H. The PKS portion of iccA and trans-acting enoyl reductase iccB work together to construct an octaketide, and two methyl groups are introduced by the MT domain of iccA during the chain assembly. The nascent chain is then condensed with tyrosine, catalyzed by the iliA C domain, and the resulting PKS-NRPS hybrid is offloaded by the iliA RED domain to form an advanced tetramic acid intermediate. The biosynthesis of ilicicolin H starts with formation of the tetramic acid by the hybrid PKS-NRPS synthetase iccA with the partnering trans-enoyl reductase iccB since iccA lacks a designated enoylreductase (ER) domain. The cytochrome P450 monooxygenase iccC then catalyzes the ring expansion of the tetramate to the acyclic 2-pyridone. The pericyclase iccD further converts the acyclic 2-pyridone into 8-epi-ilicicolin H. Finally, the epimerase iccE converts 8-epi-ilicicolin H into ilicicolin H via epimerization. IccA to iccE are sufficient for ilicicolin H biosynthesis and the roles of the remaining enzymes, iccF, iccG and iccH within the pathway have still to be determined. This Talaromyces variabilis (Penicillium variabile) protein is Trans-enoyl reductase iccB.